Consider the following 414-residue polypeptide: Enolase (414 aa).

Q162 is a binding site for (2R)-2-phosphoglycerate. Residue E204 is the Proton donor of the active site. The Mg(2+) site is built by D239, E280, and D307. The (2R)-2-phosphoglycerate site is built by K332, R361, S362, and K383. Catalysis depends on K332, which acts as the Proton acceptor.

Belongs to the enolase family. Requires Mg(2+) as cofactor.

The protein localises to the cytoplasm. The protein resides in the secreted. It is found in the cell surface. The catalysed reaction is (2R)-2-phosphoglycerate = phosphoenolpyruvate + H2O. It participates in carbohydrate degradation; glycolysis; pyruvate from D-glyceraldehyde 3-phosphate: step 4/5. Its function is as follows. Catalyzes the reversible conversion of 2-phosphoglycerate (2-PG) into phosphoenolpyruvate (PEP). It is essential for the degradation of carbohydrates via glycolysis. The polypeptide is Enolase (Campylobacter jejuni subsp. jejuni serotype O:2 (strain ATCC 700819 / NCTC 11168)).